Reading from the N-terminus, the 2944-residue chain is Collagen alpha-1(VII) chain (2944 aa).

Positions 1–24 (MRLRLLVAALCAAEILMGAPEVWA) are cleaved as a signal peptide. The interval 18 to 1254 (GAPEVWAQPR…TGPCAVHCPK (1237 aa)) is nonhelical region (NC1). Positions 39–212 (DIVFLLDGSS…SILRTLLPLI (174 aa)) constitute a VWFA 1 domain. 9 Fibronectin type-III domains span residues 235 to 330 (GPRD…TAKE), 331 to 417 (GLEL…TASS), 418 to 508 (VEQT…LEQL), 511 to 598 (PVMN…DPEA), 601 to 688 (VVPG…DPLG), 689 to 776 (PVRR…APEP), 779 to 867 (SVSK…PPAT), 870 to 957 (LLET…EPSH), and 959 to 1053 (PSTE…SHGP). A glycan (N-linked (GlcNAc...) asparagine) is linked at Asn-338. N-linked (GlcNAc...) asparagine glycosylation is present at Asn-787. The VWFA 2 domain occupies 1055-1230 (DVVFLLHATR…PGLDRAVSDL (176 aa)). Asn-1110 carries N-linked (GlcNAc...) asparagine glycosylation. A Cell attachment site motif is present at residues 1171–1173 (RGD). The interval 1255–1475 (GQKGEPGVTG…GLRGAPGMTG (221 aa)) is interrupted collagenous region. A triple-helical region region spans residues 1255 to 2775 (GQKGEPGVTG…GPRGEKGEAA (1521 aa)). 2 disordered regions span residues 1259–1934 (EPGV…GSLP) and 1960–2773 (SSGS…EKGE). The segment covering 1338–1352 (RGPQGPKGEPGEPGQ) has biased composition (low complexity). Gly residues predominate over residues 1353–1363 (ITGGGGPGFPG). Basic and acidic residues-rich tracts occupy residues 1397 to 1406 (KGDKGDRGER) and 1439 to 1448 (PGEKGEKGDC). The span at 1507-1518 (PGAAGHPGVEGP) shows a compositional bias: low complexity. Basic and acidic residues-rich tracts occupy residues 1527-1536 (RRGEKGEPGR), 1627-1639 (RGRD…KGDE), and 1666-1680 (VGEK…EDGR). Pro residues predominate over residues 1813–1822 (PPGPPGPPGV). 3 stretches are compositionally biased toward basic and acidic residues: residues 1846–1855 (EDGRKGEKGD), 1862–1871 (EGPDGPKGER), and 1968–1984 (PERR…RGPP). The Cell attachment site signature appears at 2002-2004 (RGD). The segment covering 2040–2049 (GRAGGSGEAG) has biased composition (gly residues). A compositionally biased stretch (basic and acidic residues) spans 2050-2068 (RPGERGERGEKGERGDQGR). A Cell attachment site motif is present at residues 2063-2065 (RGD). Over residues 2074-2083 (LPGPPGPPGP) the composition is skewed to pro residues. Residues 2130–2140 (DVGEPGKRGHD) show a composition bias toward basic and acidic residues. 4-hydroxyproline occurs at positions 2158, 2167, 2176, and 2179. Low complexity-rich tracts occupy residues 2182–2197 (PGLA…SGLK), 2226–2241 (SGLV…PGQV), 2279–2299 (PKGE…PPGA), and 2306–2317 (PGDLAGALLGEP). Basic and acidic residues predominate over residues 2319-2335 (AKGDRGLPGPRGEKGEA). Positions 2414-2427 (ERGLAGPPGREGAP) are enriched in low complexity. Composition is skewed to basic and acidic residues over residues 2462-2477 (RGER…DGHP) and 2525-2544 (AKGD…KGPR). A compositionally biased stretch (low complexity) spans 2576 to 2594 (PKGEPGAAGIPGEPGAPGK). Residues 2601–2603 (RGD) carry the Cell attachment site motif. Basic and acidic residues predominate over residues 2615 to 2636 (LKGEKGIKGTCGRDGERGDKGE). 5-hydroxylysine occurs at positions 2616 and 2622. The Cell attachment site signature appears at 2631–2633 (RGD). Pro-2655, Pro-2658, and Pro-2664 each carry 4-hydroxyproline. Positions 2695-2704 (GPPGVGGFPG) are enriched in gly residues. Residues 2776–2944 (LTEDDIRDFV…GVHSQKTGAA (169 aa)) form a nonhelical region (NC2) region. The 53-residue stretch at 2879–2931 (CSLPLDEGSCTAYTLRWYHRAVPGGTACHPFVYGGCGGNANRFGTREACERRC) folds into the BPTI/Kunitz inhibitor domain. 3 disulfide bridges follow: Cys-2879–Cys-2931, Cys-2888–Cys-2914, and Cys-2906–Cys-2927.

Homotrimer. Interacts with MIA3/TANGO1; facilitating its loading into transport carriers and subsequent secretion. In terms of processing, prolines at the third position of the tripeptide repeating unit (G-X-Y) are hydroxylated in some or all of the chains.

The protein resides in the secreted. It localises to the extracellular space. Its subcellular location is the extracellular matrix. It is found in the basement membrane. In terms of biological role, stratified squamous epithelial basement membrane protein that forms anchoring fibrils which may contribute to epithelial basement membrane organization and adherence by interacting with extracellular matrix (ECM) proteins such as type IV collagen. The sequence is that of Collagen alpha-1(VII) chain from Mus musculus (Mouse).